The following is a 260-amino-acid chain: MQKDYQKLIVYLCDFLEKEAQKRGFKKVVYGLSGGLDSAVVGVLCQKVFKENAHALLMPSSVSMPESKTDALNLCETFSIPYTEYSIAPYDKIFGSHFKDASLTRKGNFCARLRMAFLYDYSLKSDSLVIGTSNKSERILGYGTLFGDLACAINPIGELFKTEVYELAYYLNIPKKILNKPPSADLFVGQSDEKDLGYPYSVIDPLLKDIEALFQTKPIHLETLTQLGYDEILVKNIISRIQKNAFKLESPTIAKRFNPK.

Position 31–38 (31–38) interacts with ATP; the sequence is GLSGGLDS. Asp37 is a binding site for Mg(2+). Arg112 serves as a coordination point for deamido-NAD(+). Position 132 (Thr132) interacts with ATP. Mg(2+) is bound at residue Glu137. ATP contacts are provided by Lys161 and Ser183.

It belongs to the NAD synthetase family. As to quaternary structure, homodimer.

It catalyses the reaction deamido-NAD(+) + NH4(+) + ATP = AMP + diphosphate + NAD(+) + H(+). It functions in the pathway cofactor biosynthesis; NAD(+) biosynthesis; NAD(+) from deamido-NAD(+) (ammonia route): step 1/1. In terms of biological role, catalyzes the ATP-dependent amidation of deamido-NAD to form NAD. Uses ammonia as a nitrogen source. The chain is NH(3)-dependent NAD(+) synthetase from Helicobacter pylori (strain G27).